We begin with the raw amino-acid sequence, 917 residues long: MLQSLKNVFFSDTTTTTTPTTPTTPTTPTTTPTTTTTPTTTPTTTTTSTTPISNLSIKRDIGNINDYKNANYFNYYRILENKYNYLRYNTGLKNISNNETFKLIDFTIDSEMNNTCITSNWNQKYSNNSSTPVEGVYKIPLAPYSVVSGFTVEYQDKVFIGKIKSKEKAQNQYSDSIASGGQAFLAEKTQDGQFSFRIGNLPPNENVTIHLTIISEVCPHLSSLQNCFHRFLFPNYSFNFQFNLNIKLTLPIKTIELLYYPNKDIKFKENSNNKEATLTFSSNNGIDDDIVCIVEPENDIERPQSIIEHSKLNNTYAVSVNFTPSFSHLTSDDVNQKSEFIFLIDCSGSMSGEPIKKAKRALEIIIRSLNENCKFNIYCFGSRFTKAFDNSKMYNDETLKEISGYVEKIDADLGGTELLPPIRDILSTESDFEYPRQLFILTDGEVSERDSLINYVATESNNTRIFTYGIGNSVDTELVIGLSKACKGYYEMIKDNSNFEEQVMKLVSIAFEPTLSNIKVDWGTELQIEQGPTKIRPLYSGETLIVYALLKDNKIPQSTVQVSLIGDGPTGSKLEFPITLDFSKTIDYENNSVHTLAAFNIIKDLEEVERKGNHSNNRDRIEELGKNYGLISKYTSYIVTAASEQVTEETMKTLNIIQIPTTTTTSHTNFETEEDSDDLFSSENRNQTLANISNDMEKIKDIFDDISRLISEQSCMLNEIGDANIEASTLGINSIPQKSNIFSKITSFFSSPSEVSTSKSNFDSDIGSEERRNNNNNNNNNNININNNNNNNNNNNNNNNNNNNNNNNNNNNNNNNNNSDNSDSLLKLIRLQKANGSWSSPFSEFKIDLSKKPSNIDNDDIWITLIVINKILNDYPTQQSQYDLVIQKASKWVKQQLTRLNIPNQYGSLLATSKLYI.

The interval 12 to 51 (DTTTTTTPTTPTTPTTPTTTPTTTTTPTTTPTTTTTSTTP) is disordered. The segment covering 13-51 (TTTTTTPTTPTTPTTPTTTPTTTTTPTTTPTTTTTSTTP) has biased composition (low complexity). Positions 87–215 (RYNTGLKNIS…NVTIHLTIIS (129 aa)) constitute a VIT domain. Positions 339-507 (EFIFLIDCSG…NFEEQVMKLV (169 aa)) constitute a VWFA domain. One can recognise a t-SNARE coiled-coil homology domain in the interval 679 to 741 (LFSSENRNQT…INSIPQKSNI (63 aa)). Composition is skewed to low complexity over residues 751–760 (SPSEVSTSKS) and 774–818 (NNNN…NNNN). A disordered region spans residues 751–822 (SPSEVSTSKS…NNNNNNSDNS (72 aa)).

The sequence is that of von Willebrand factor A domain-containing protein DDB_G0285975 from Dictyostelium discoideum (Social amoeba).